Here is a 253-residue protein sequence, read N- to C-terminus: uncharacterized protein (253 aa).

The protein belongs to the methyltransferase superfamily.

This is an uncharacterized protein from Mycobacterium avium (strain 104).